Consider the following 464-residue polypeptide: Forkhead box protein N3 (464 aa).

2 disordered regions span residues 1-53 (MGPI…EKGG) and 85-108 (PVQDIDDDTPPSPAQSDMPYDAKQ). Residues 14–30 (TGISVSSQCYRSSTLSN) are compositionally biased toward polar residues. Residues 113-209 (KPPYSFSCLI…QALKKTPYHP (97 aa)) constitute a DNA-binding region (fork-head). Disordered stretches follow at residues 294–337 (MESE…SSSA) and 381–428 (LVES…MKEA). The span at 316 to 336 (SSAKSANKRSSSPSDSISSSS) shows a compositional bias: low complexity. A compositionally biased stretch (basic residues) spans 389–401 (QHKKKQHLLKLRR).

The protein resides in the nucleus. Acts as a transcriptional repressor. May be involved in DNA damage-inducible cell cycle arrests (checkpoints). This is Forkhead box protein N3 from Xenopus tropicalis (Western clawed frog).